An 85-amino-acid chain; its full sequence is ATP synthase subunit c (85 aa).

2 helical membrane-spanning segments follow: residues 10 to 30 (GLAL…GAIG) and 65 to 85 (AVAE…LLVV).

Belongs to the ATPase C chain family. As to quaternary structure, F-type ATPases have 2 components, F(1) - the catalytic core - and F(0) - the membrane proton channel. F(1) has five subunits: alpha(3), beta(3), gamma(1), delta(1), epsilon(1). F(0) has three main subunits: a(1), b(2) and c(10-14). The alpha and beta chains form an alternating ring which encloses part of the gamma chain. F(1) is attached to F(0) by a central stalk formed by the gamma and epsilon chains, while a peripheral stalk is formed by the delta and b chains.

The protein localises to the cell inner membrane. Functionally, f(1)F(0) ATP synthase produces ATP from ADP in the presence of a proton or sodium gradient. F-type ATPases consist of two structural domains, F(1) containing the extramembraneous catalytic core and F(0) containing the membrane proton channel, linked together by a central stalk and a peripheral stalk. During catalysis, ATP synthesis in the catalytic domain of F(1) is coupled via a rotary mechanism of the central stalk subunits to proton translocation. In terms of biological role, key component of the F(0) channel; it plays a direct role in translocation across the membrane. A homomeric c-ring of between 10-14 subunits forms the central stalk rotor element with the F(1) delta and epsilon subunits. The polypeptide is ATP synthase subunit c (Thermotoga maritima (strain ATCC 43589 / DSM 3109 / JCM 10099 / NBRC 100826 / MSB8)).